Consider the following 156-residue polypeptide: Ribonuclease pancreatic (156 aa).

An N-terminal signal peptide occupies residues 1–28 (MALEKSLALLPLLVLVLLVLGWVQPSLG). Residues Lys-35 and Arg-38 each contribute to the substrate site. His-40 serves as the catalytic Proton acceptor. Cystine bridges form between Cys-54/Cys-112, Cys-68/Cys-123, Cys-86/Cys-138, and Cys-93/Cys-100. N-linked (GlcNAc...) asparagine glycosylation occurs at Asn-62. Residue 69-73 (KPVNT) participates in substrate binding. N-linked (GlcNAc...) asparagine glycosylation is present at Asn-90. Residues Lys-94 and Arg-113 each coordinate substrate. His-147 functions as the Proton donor in the catalytic mechanism.

Belongs to the pancreatic ribonuclease family. In terms of assembly, monomer. Interacts with and forms tight 1:1 complexes with RNH1. Dimerization of two such complexes may occur. Interaction with RNH1 inhibits this protein.

The protein resides in the secreted. The enzyme catalyses an [RNA] containing cytidine + H2O = an [RNA]-3'-cytidine-3'-phosphate + a 5'-hydroxy-ribonucleotide-3'-[RNA].. It catalyses the reaction an [RNA] containing uridine + H2O = an [RNA]-3'-uridine-3'-phosphate + a 5'-hydroxy-ribonucleotide-3'-[RNA].. Endonuclease that catalyzes the cleavage of RNA on the 3' side of pyrimidine nucleotides. Acts on single-stranded and double-stranded RNA. The sequence is that of Ribonuclease pancreatic (RNASE1) from Lagothrix lagotricha (Brown woolly monkey).